The following is a 164-amino-acid chain: Phosphopantetheine adenylyltransferase (164 aa).

Belongs to the eukaryotic CoaD family.

The protein resides in the cytoplasm. It catalyses the reaction (R)-4'-phosphopantetheine + ATP + H(+) = 3'-dephospho-CoA + diphosphate. It participates in cofactor biosynthesis; coenzyme A biosynthesis. Functionally, reversibly transfers an adenylyl group from ATP to 4'-phosphopantetheine, yielding dephospho-CoA (dPCoA) and pyrophosphate. The protein is Phosphopantetheine adenylyltransferase of Methanothermobacter thermautotrophicus (strain ATCC 29096 / DSM 1053 / JCM 10044 / NBRC 100330 / Delta H) (Methanobacterium thermoautotrophicum).